Here is a 206-residue protein sequence, read N- to C-terminus: Small ribosomal subunit protein uS4 (206 aa).

The 61-residue stretch at 96 to 156 folds into the S4 RNA-binding domain; it reads CRLDNVVYRM…EKSKNQLRIA (61 aa).

Belongs to the universal ribosomal protein uS4 family. Part of the 30S ribosomal subunit. Contacts protein S5. The interaction surface between S4 and S5 is involved in control of translational fidelity.

Its function is as follows. One of the primary rRNA binding proteins, it binds directly to 16S rRNA where it nucleates assembly of the body of the 30S subunit. In terms of biological role, with S5 and S12 plays an important role in translational accuracy. This is Small ribosomal subunit protein uS4 from Ectopseudomonas mendocina (strain ymp) (Pseudomonas mendocina).